A 282-amino-acid chain; its full sequence is 4-hydroxy-3-methylbut-2-enyl diphosphate reductase (282 aa).

Cysteine 12 serves as a coordination point for [4Fe-4S] cluster. (2E)-4-hydroxy-3-methylbut-2-enyl diphosphate is bound by residues histidine 40 and histidine 72. Positions 40 and 72 each coordinate dimethylallyl diphosphate. The isopentenyl diphosphate site is built by histidine 40 and histidine 72. Cysteine 94 contacts [4Fe-4S] cluster. Histidine 122 is a (2E)-4-hydroxy-3-methylbut-2-enyl diphosphate binding site. Histidine 122 is a dimethylallyl diphosphate binding site. Position 122 (histidine 122) interacts with isopentenyl diphosphate. The active-site Proton donor is glutamate 124. Threonine 160 is a binding site for (2E)-4-hydroxy-3-methylbut-2-enyl diphosphate. Residue cysteine 188 participates in [4Fe-4S] cluster binding. 3 residues coordinate (2E)-4-hydroxy-3-methylbut-2-enyl diphosphate: serine 216, asparagine 218, and serine 260. Dimethylallyl diphosphate-binding residues include serine 216, asparagine 218, and serine 260. Positions 216, 218, and 260 each coordinate isopentenyl diphosphate.

It belongs to the IspH family. [4Fe-4S] cluster serves as cofactor.

It carries out the reaction isopentenyl diphosphate + 2 oxidized [2Fe-2S]-[ferredoxin] + H2O = (2E)-4-hydroxy-3-methylbut-2-enyl diphosphate + 2 reduced [2Fe-2S]-[ferredoxin] + 2 H(+). It catalyses the reaction dimethylallyl diphosphate + 2 oxidized [2Fe-2S]-[ferredoxin] + H2O = (2E)-4-hydroxy-3-methylbut-2-enyl diphosphate + 2 reduced [2Fe-2S]-[ferredoxin] + 2 H(+). It participates in isoprenoid biosynthesis; dimethylallyl diphosphate biosynthesis; dimethylallyl diphosphate from (2E)-4-hydroxy-3-methylbutenyl diphosphate: step 1/1. Its pathway is isoprenoid biosynthesis; isopentenyl diphosphate biosynthesis via DXP pathway; isopentenyl diphosphate from 1-deoxy-D-xylulose 5-phosphate: step 6/6. Functionally, catalyzes the conversion of 1-hydroxy-2-methyl-2-(E)-butenyl 4-diphosphate (HMBPP) into a mixture of isopentenyl diphosphate (IPP) and dimethylallyl diphosphate (DMAPP). Acts in the terminal step of the DOXP/MEP pathway for isoprenoid precursor biosynthesis. This chain is 4-hydroxy-3-methylbut-2-enyl diphosphate reductase, found in Geobacter sulfurreducens (strain ATCC 51573 / DSM 12127 / PCA).